A 386-amino-acid polypeptide reads, in one-letter code: S-adenosylmethionine synthase (386 aa).

His-14 serves as a coordination point for ATP. A Mg(2+)-binding site is contributed by Asp-16. Residue Glu-42 coordinates K(+). L-methionine-binding residues include Glu-55 and Gln-101. Residues 101–111 (QSADIALGVDE) form a flexible loop region. ATP is bound by residues 166-168 (DGK), 233-234 (RF), Asp-242, 248-249 (RK), Ala-265, and Lys-269. An L-methionine-binding site is contributed by Asp-242. Residue Lys-273 participates in L-methionine binding.

Belongs to the AdoMet synthase family. Homotetramer; dimer of dimers. It depends on Mg(2+) as a cofactor. K(+) serves as cofactor.

Its subcellular location is the cytoplasm. It carries out the reaction L-methionine + ATP + H2O = S-adenosyl-L-methionine + phosphate + diphosphate. Its pathway is amino-acid biosynthesis; S-adenosyl-L-methionine biosynthesis; S-adenosyl-L-methionine from L-methionine: step 1/1. Functionally, catalyzes the formation of S-adenosylmethionine (AdoMet) from methionine and ATP. The overall synthetic reaction is composed of two sequential steps, AdoMet formation and the subsequent tripolyphosphate hydrolysis which occurs prior to release of AdoMet from the enzyme. This chain is S-adenosylmethionine synthase, found in Acholeplasma laidlawii (strain PG-8A).